The sequence spans 360 residues: Hydroxyproline O-arabinosyltransferase RDN2 (360 aa).

The chain crosses the membrane as a helical; Signal-anchor span at residues 13–33; the sequence is VLGSSFATYNLVTMIIHYGSA.

Its subcellular location is the golgi apparatus membrane. It catalyses the reaction trans-4-hydroxy-L-prolyl-[protein] + UDP-beta-L-arabinofuranose = O-(beta-L-arabinofuranosyl)-trans-4-hydroxy-L-prolyl-[protein] + UDP + H(+). Its function is as follows. Glycosyltransferase involved in the O-arabinosylation of several proteins including extensins and small signaling peptides. Catalyzes the transfer of the initial L-arabinose to the hydroxyl group of Hyp residues. Probably involved in the arabinosylation of CLAVATA3/ESR-related (CLE) signaling peptides that move from root to shoot, to interact with SUNN receptor kinase signaling that regulates nodulation. Involved in long distance nodulation signaling events. Involved in the autoregulation of nodulation (AON), a long distance systemic signaling from root to shoot and back again, which allows legumes to limit the number of root nodules formed based on available nitrogen and previous rhizobial colonization. Functions in the root, upstream of the shoot receptor kinase SUNN and via CLE peptide, to control AON. This is Hydroxyproline O-arabinosyltransferase RDN2 from Medicago truncatula (Barrel medic).